Reading from the N-terminus, the 223-residue chain is Proteinase inhibitor type-2 TR8 (223 aa).

Residues 1–24 (MAIYKVALLLLFGMILLASDFEHA) form the signal peptide. 3 repeat units span residues 24–81 (AKAC…EWVS), 88–145 (KKAC…EWVS), and 152–209 (EKDC…EWVS). 8 disulfide bridges follow: C27-C120, C31-C116, C40-C126, C52-C95, C55-C73, C56-C91, C62-C104, and C119-C137.

It belongs to the protease inhibitor I20 (potato type II proteinase inhibitor) family.

In Solanum lycopersicum (Tomato), this protein is Proteinase inhibitor type-2 TR8 (ARPI).